Reading from the N-terminus, the 213-residue chain is ATP-dependent Clp protease proteolytic subunit (213 aa).

Catalysis depends on serine 114, which acts as the Nucleophile. Histidine 139 is an active-site residue.

It belongs to the peptidase S14 family. In terms of assembly, fourteen ClpP subunits assemble into 2 heptameric rings which stack back to back to give a disk-like structure with a central cavity, resembling the structure of eukaryotic proteasomes.

It localises to the cytoplasm. The enzyme catalyses Hydrolysis of proteins to small peptides in the presence of ATP and magnesium. alpha-casein is the usual test substrate. In the absence of ATP, only oligopeptides shorter than five residues are hydrolyzed (such as succinyl-Leu-Tyr-|-NHMec, and Leu-Tyr-Leu-|-Tyr-Trp, in which cleavage of the -Tyr-|-Leu- and -Tyr-|-Trp bonds also occurs).. Its function is as follows. Cleaves peptides in various proteins in a process that requires ATP hydrolysis. Has a chymotrypsin-like activity. Plays a major role in the degradation of misfolded proteins. The protein is ATP-dependent Clp protease proteolytic subunit of Pseudomonas putida (strain ATCC 47054 / DSM 6125 / CFBP 8728 / NCIMB 11950 / KT2440).